Reading from the N-terminus, the 271-residue chain is Type III pantothenate kinase (271 aa).

Asp-6–Val-13 serves as a coordination point for ATP. Gly-109 to Arg-112 is a substrate binding site. Catalysis depends on Asp-111, which acts as the Proton acceptor. A K(+)-binding site is contributed by Asp-131. Position 134 (Thr-134) interacts with ATP. Residue Thr-186 coordinates substrate.

It belongs to the type III pantothenate kinase family. As to quaternary structure, homodimer. NH4(+) is required as a cofactor. Requires K(+) as cofactor.

Its subcellular location is the cytoplasm. It carries out the reaction (R)-pantothenate + ATP = (R)-4'-phosphopantothenate + ADP + H(+). Its pathway is cofactor biosynthesis; coenzyme A biosynthesis; CoA from (R)-pantothenate: step 1/5. In terms of biological role, catalyzes the phosphorylation of pantothenate (Pan), the first step in CoA biosynthesis. The polypeptide is Type III pantothenate kinase (Rhodococcus opacus (strain B4)).